A 399-amino-acid polypeptide reads, in one-letter code: Phosphoglycerate kinase (399 aa).

Substrate-binding positions include 22–24, R38, 61–64, R120, and R153; these read DFN and HLGR. ATP is bound by residues K204, E326, and 352 to 355; that span reads GGDT.

This sequence belongs to the phosphoglycerate kinase family. Monomer.

It is found in the cytoplasm. It carries out the reaction (2R)-3-phosphoglycerate + ATP = (2R)-3-phospho-glyceroyl phosphate + ADP. It participates in carbohydrate degradation; glycolysis; pyruvate from D-glyceraldehyde 3-phosphate: step 2/5. The sequence is that of Phosphoglycerate kinase from Citrifermentans bemidjiense (strain ATCC BAA-1014 / DSM 16622 / JCM 12645 / Bem) (Geobacter bemidjiensis).